The primary structure comprises 282 residues: Non-selective voltage-gated ion channel VDAC2 (282 aa).

The residue at position 1 (Ala1) is an N-acetylalanine. 19 beta stranded membrane passes run 25–34 (LVKLDVKTKS), 38–46 (VEFTTSGTS), 53–63 (VNGSLETKYKW), 68–75 (LTFTEKWN), 79–88 (TLGTEIAIED), 94–103 (LKLTFDTTFS), 110–119 (SGKVKAAYKQ), 122–129 (VNLGCDVD), 136–144 (AIHGSAVVG), 149–157 (LAGYQMTFD), 162–174 (KLTK…GYKT), 177–184 (FQLHTNVN), 188–197 (EFAGSIYQKV), 201–210 (METAVNLAWT), 217–226 (RFGIAAKYQL), 230–237 (AAISAKVN), 241–250 (LVGVGYTQTL), 253–262 (GVKLTLSALV), and 272–281 (HKLGLGLELE). NAD(+) is bound by residues 241-243 (LVG) and 259-263 (SALVD).

Belongs to the eukaryotic mitochondrial porin family. Monomer, homodimer and higher order oligomers; formation of higher order structures is necessary for scramblase activity. As to expression, expressed in skeletal muscle and oocytes.

It is found in the mitochondrion outer membrane. The protein resides in the membrane. The catalysed reaction is chloride(in) = chloride(out). It carries out the reaction K(+)(in) = K(+)(out). It catalyses the reaction a 1,2-diacyl-sn-glycero-3-phospho-L-serine(in) = a 1,2-diacyl-sn-glycero-3-phospho-L-serine(out). The enzyme catalyses a 1,2-diacyl-sn-glycero-3-phosphocholine(in) = a 1,2-diacyl-sn-glycero-3-phosphocholine(out). The catalysed reaction is a 1,2-diacyl-sn-glycero-3-phospho-(1D-myo-inositol)(in) = a 1,2-diacyl-sn-glycero-3-phospho-(1D-myo-inositol)(out). In terms of biological role, non-selective voltage-gated ion channel that mediates the transport of anions and cations through the mitochondrion outer membrane and plasma membrane. The channel adopts an open conformation at zero mV and a closed conformation at both positive and negative potentials. There are two populations of channels; the main that functions in a lower open-state conductance with lower ion selectivity, that switch, in a voltage-dependent manner, from the open to a low-conducting 'closed' state and the other that has a normal ion selectivity in the typical high conductance, 'open' state. Catalyzes the scrambling of phospholipids across the outer mitochondrial membrane; the mechanism is unrelated to channel activity and is capable of translocating both anionic and zwitterionic phospholipids. The chain is Non-selective voltage-gated ion channel VDAC2 from Xenopus laevis (African clawed frog).